We begin with the raw amino-acid sequence, 371 residues long: Phosphate acyltransferase (371 aa).

This sequence belongs to the PlsX family. As to quaternary structure, homodimer. Probably interacts with PlsY.

The protein localises to the cytoplasm. It catalyses the reaction a fatty acyl-[ACP] + phosphate = an acyl phosphate + holo-[ACP]. The protein operates within lipid metabolism; phospholipid metabolism. Catalyzes the reversible formation of acyl-phosphate (acyl-PO(4)) from acyl-[acyl-carrier-protein] (acyl-ACP). This enzyme utilizes acyl-ACP as fatty acyl donor, but not acyl-CoA. This is Phosphate acyltransferase from Ruegeria pomeroyi (strain ATCC 700808 / DSM 15171 / DSS-3) (Silicibacter pomeroyi).